Consider the following 183-residue polypeptide: MNVSFSIAPYFFKERRAKLNSFRKRKVEIVAEIDSLLKNSSSLAIVEYRGLTVNKLEQLRKEFKSAGVLSKVYKNRLFKIAAENNGYLDLQTDLVGPNLFAFGTTDAIAPAKIIAKNAKEQPLLILKGGIYDNQVVSAAENALISALPSYTEALTMLASGLQSPLKQLAFGLKLLIDEQKITA.

Belongs to the universal ribosomal protein uL10 family. In terms of assembly, part of the ribosomal stalk of the 50S ribosomal subunit. The N-terminus interacts with L11 and the large rRNA to form the base of the stalk. The C-terminus forms an elongated spine to which L12 dimers bind in a sequential fashion forming a multimeric L10(L12)X complex.

Functionally, forms part of the ribosomal stalk, playing a central role in the interaction of the ribosome with GTP-bound translation factors. In Mesomycoplasma hyopneumoniae (strain 7448) (Mycoplasma hyopneumoniae), this protein is Large ribosomal subunit protein uL10.